A 566-amino-acid chain; its full sequence is Transmembrane protein 151B (566 aa).

Over residues 1 to 11 (MSPPGSAAGES) the composition is skewed to low complexity. Residues 1 to 25 (MSPPGSAAGESAAGGGGGGGGPGVS) are disordered. A compositionally biased stretch (gly residues) spans 12-23 (AAGGGGGGGGPG). Helical transmembrane passes span 65-85 (CLLL…CHVT) and 112-132 (YVYI…VECW). The segment covering 495-512 (VNEASCPTEQTRLSSQAS) has biased composition (polar residues). Positions 495–529 (VNEASCPTEQTRLSSQASMGDDEDDDEEEAGPPPP) are disordered. Over residues 514-524 (GDDEDDDEEEA) the composition is skewed to acidic residues.

Belongs to the TMEM151 family.

It is found in the membrane. The chain is Transmembrane protein 151B (TMEM151B) from Homo sapiens (Human).